The primary structure comprises 361 residues: Actin maturation protease (361 aa).

Residues 1–75 (MTSPCSFPLK…PPPPPLPSAV (75 aa)) form a disordered region. Composition is skewed to pro residues over residues 24 to 33 (NIPPPLPLNP) and 52 to 72 (PLPPPPPPPAPPPPPPPPPLP). Positions 134 to 254 (SCIQEGPQCG…WAVSAGVLIG (121 aa)) are peptidase C39-like. Cysteine 142 is a catalytic residue.

This sequence belongs to the ACTMAP family. In terms of assembly, interacts (via N-terminus) with PFN2 isoforms 1/IIa and 2/IIb; the interactions may facilitate efficient cleavage of the acetylated N-terminus of immature actin. Interacts with PFN1.

Its subcellular location is the cytoplasm. It carries out the reaction N-terminal N(alpha)-acetyl-L-methionyl-L-aspartyl-[protein] + H2O = N-terminal L-aspartyl-[protein] + N-acetyl-L-methionine. The catalysed reaction is N-terminal N(alpha)-acetyl-L-methionyl-L-glutamyl-[protein] + H2O = N-terminal L-glutamyl-[protein] + N-acetyl-L-methionine. It catalyses the reaction N-terminal N(alpha)-acetyl-L-cysteinyl-L-aspartyl-[protein] + H2O = N-terminal L-aspartyl-[protein] + N-acetyl-L-cysteine. The enzyme catalyses N-terminal N(alpha)-acetyl-L-cysteinyl-L-glutamyl-[protein] + H2O = N-terminal L-glutamyl-[protein] + N-acetyl-L-cysteine. Functionally, actin maturation protease that specifically mediates the cleavage of immature acetylated N-terminal actin, thereby contributing to actin maturation. Cleaves N-terminal acetylated methionine of immature cytoplasmic beta- and gamma-actins Actb and Actg1 after translation. Cleaves N-terminal acetylated cysteine of muscle alpha-actins Acta1, Actc1 and Acta2 after canonical removal of N-terminal methionine. This chain is Actin maturation protease, found in Mus musculus (Mouse).